A 525-amino-acid polypeptide reads, in one-letter code: Endoglucanase 10 (525 aa).

The first 26 residues, 1–26 (MEEKSKSRGWCGWFIAIIVLASVILA), serve as a signal peptide directing secretion. Asp109 serves as the catalytic Nucleophile. An N-linked (GlcNAc...) asparagine glycan is attached at Asn259. His442 is an active-site residue. N-linked (GlcNAc...) asparagine glycosylation is found at Asn464 and Asn484. Active-site residues include Asp489 and Glu498.

Belongs to the glycosyl hydrolase 9 (cellulase E) family.

It localises to the secreted. It catalyses the reaction Endohydrolysis of (1-&gt;4)-beta-D-glucosidic linkages in cellulose, lichenin and cereal beta-D-glucans.. The chain is Endoglucanase 10 from Arabidopsis thaliana (Mouse-ear cress).